Consider the following 654-residue polypeptide: DNA ligase (654 aa).

Residues 32-36 (DAVYD) and 81-82 (SL) contribute to the NAD(+) site. Lysine 112 (N6-AMP-lysine intermediate) is an active-site residue. NAD(+) contacts are provided by arginine 133, glutamate 167, and lysine 306. Cysteine 400, cysteine 403, cysteine 416, and cysteine 421 together coordinate Zn(2+). The region spanning 577–654 (ESSSIFSHKT…EEELLKYLKE (78 aa)) is the BRCT domain.

Belongs to the NAD-dependent DNA ligase family. LigA subfamily. It depends on Mg(2+) as a cofactor. Mn(2+) is required as a cofactor.

The enzyme catalyses NAD(+) + (deoxyribonucleotide)n-3'-hydroxyl + 5'-phospho-(deoxyribonucleotide)m = (deoxyribonucleotide)n+m + AMP + beta-nicotinamide D-nucleotide.. In terms of biological role, DNA ligase that catalyzes the formation of phosphodiester linkages between 5'-phosphoryl and 3'-hydroxyl groups in double-stranded DNA using NAD as a coenzyme and as the energy source for the reaction. It is essential for DNA replication and repair of damaged DNA. This Helicobacter acinonychis (strain Sheeba) protein is DNA ligase.